A 1382-amino-acid chain; its full sequence is Hepatocyte growth factor receptor (1382 aa).

Positions 1–24 (MKAPAVLAPGVLVLLFTLVRKSHG) are cleaved as a signal peptide. At 25 to 935 (ECEEALAKSK…VQPDQNFTGL (911 aa)) the chain is on the extracellular side. The region spanning 27 to 516 (EEALAKSKMN…TGKKITKIPL (490 aa)) is the Sema domain. The N-linked (GlcNAc...) asparagine glycan is linked to asparagine 45. Intrachain disulfides connect cysteine 95/cysteine 101, cysteine 98/cysteine 160, cysteine 133/cysteine 141, and cysteine 173/cysteine 176. Asparagine 106 is a glycosylation site (N-linked (GlcNAc...) asparagine). N-linked (GlcNAc...) asparagine glycans are attached at residues asparagine 203 and asparagine 359. 2 disulfides stabilise this stretch: cysteine 299–cysteine 364 and cysteine 386–cysteine 398. Asparagine 400, asparagine 406, and asparagine 450 each carry an N-linked (GlcNAc...) asparagine glycan. 4 disulfide bridges follow: cysteine 521–cysteine 539, cysteine 527–cysteine 562, cysteine 530–cysteine 546, and cysteine 542–cysteine 552. 3 consecutive IPT/TIG domains span residues 564–656 (PTIY…FSYV), 658–740 (PVIT…FSYQ), and 743–837 (PTVY…LIYV). Threonine 583 carries an O-linked (Man) threonine glycan. 2 N-linked (GlcNAc...) asparagine glycosylation sites follow: asparagine 608 and asparagine 636. Threonine 677 carries an O-linked (Man) threonine glycan. Asparagine 751 is a glycosylation site (N-linked (GlcNAc...) asparagine). An O-linked (Man) threonine glycan is attached at threonine 762. Asparagine 786, asparagine 880, and asparagine 931 each carry an N-linked (GlcNAc...) asparagine glycan. A helical membrane pass occupies residues 936–956 (IVGVVSISIILLLLLGLFLWL). At 957–1382 (KKRKQIKDLG…QDSVDDEVDT (426 aa)) the chain is on the cytoplasmic side. Position 967 is a phosphoserine (serine 967). Threonine 978 carries the post-translational modification Phosphothreonine. Serine 991, serine 998, and serine 1001 each carry phosphoserine. A Phosphotyrosine modification is found at tyrosine 1004. Positions 1079–1346 (VHFNEVIGRG…RISAIFSTFI (268 aa)) constitute a Protein kinase domain. Residues 1085–1093 (IGRGHFGCV) and lysine 1111 each bind ATP. The Proton acceptor role is filled by aspartate 1205. Residues 1213-1382 (LDEKFTVKVA…QDSVDDEVDT (170 aa)) form an interaction with RANBP9 region. Position 1231 is a phosphotyrosine (tyrosine 1231). Phosphotyrosine; by autocatalysis is present on residues tyrosine 1235 and tyrosine 1236. Position 1290 is a phosphothreonine (threonine 1290). An interaction with MUC20 region spans residues 1321-1360 (WHPKAEMRPSFSELVSRISAIFSTFIGEHYVHVNTTYVNV). A phosphotyrosine; by autocatalysis mark is found at tyrosine 1350 and tyrosine 1357. A Phosphotyrosine modification is found at tyrosine 1366.

The protein belongs to the protein kinase superfamily. Tyr protein kinase family. As to quaternary structure, heterodimer made of an alpha chain (50 kDa) and a beta chain (145 kDa) which are disulfide linked. Binds PLXNB1. Interacts when phosphorylated with downstream effectors including STAT3, PIK3R1, SRC, PCLG1, GRB2 and GAB1. Interacts with SPSB1, SPSB2 and SPSB4. Interacts with INPP5D/SHIP1. When phosphorylated at Tyr-1357, interacts with INPPL1/SHIP2. Interacts with RANBP9 and RANBP10, as well as SPSB1, SPSB2, SPSB3 and SPSB4. SPSB1 binding occurs in the presence and in the absence of HGF, however HGF treatment has a positive effect on this interaction. Interacts with MUC20; prevents interaction with GRB2 and suppresses hepatocyte growth factor-induced cell proliferation. Interacts with GRB10. Interacts with PTPN1 and PTPN2. Interacts with HSP90AA1 and HSP90AB1; the interaction suppresses MET kinase activity. Interacts with tensin TNS3. Interacts (when phosphorylated) with tensin TNS4 (via SH2 domain); the interaction increases MET protein stability by inhibiting MET endocytosis and subsequent lysosomal degradation. Post-translationally, autophosphorylated in response to ligand binding on Tyr-1235 and Tyr-1236 in the kinase domain leading to further phosphorylation of Tyr-1350 and Tyr-1357 in the C-terminal multifunctional docking site. Dephosphorylated by PTPRJ at Tyr-1350 and Tyr-1366. Dephosphorylated by PTPN1 and PTPN2. Ubiquitinated. Ubiquitination by CBL regulates the receptor stability and activity through proteasomal degradation. In terms of processing, O-mannosylation of IPT/TIG domains by TMEM260 is required for protein maturation. O-mannosylated residues are composed of single mannose glycans that are not elongated or modified.

It localises to the membrane. The enzyme catalyses L-tyrosyl-[protein] + ATP = O-phospho-L-tyrosyl-[protein] + ADP + H(+). Its activity is regulated as follows. In its inactive state, the C-terminal tail interacts with the catalytic domain and inhibits the kinase activity. Upon ligand binding, the C-terminal tail is displaced and becomes phosphorylated, thus increasing the kinase activity. Receptor tyrosine kinase that transduces signals from the extracellular matrix into the cytoplasm by binding to hepatocyte growth factor/HGF ligand. Regulates many physiological processes including proliferation, scattering, morphogenesis and survival. Ligand binding at the cell surface induces autophosphorylation of MET on its intracellular domain that provides docking sites for downstream signaling molecules. Following activation by ligand, interacts with the PI3-kinase subunit PIK3R1, PLCG1, SRC, GRB2, STAT3 or the adapter GAB1. Recruitment of these downstream effectors by MET leads to the activation of several signaling cascades including the RAS-ERK, PI3 kinase-AKT, or PLCgamma-PKC. The RAS-ERK activation is associated with the morphogenetic effects while PI3K/AKT coordinates prosurvival effects. During embryonic development, MET signaling plays a role in gastrulation, development and migration of muscles and neuronal precursors, angiogenesis and kidney formation. In adults, participates in wound healing as well as organ regeneration and tissue remodeling. Also promotes differentiation and proliferation of hematopoietic cells. In Loxodonta africana (African elephant), this protein is Hepatocyte growth factor receptor (MET).